Here is a 156-residue protein sequence, read N- to C-terminus: Ribosomal RNA large subunit methyltransferase H (156 aa).

Residues G104 and 123-128 (LSPMVM) each bind S-adenosyl-L-methionine.

This sequence belongs to the RNA methyltransferase RlmH family. In terms of assembly, homodimer.

It is found in the cytoplasm. The enzyme catalyses pseudouridine(1915) in 23S rRNA + S-adenosyl-L-methionine = N(3)-methylpseudouridine(1915) in 23S rRNA + S-adenosyl-L-homocysteine + H(+). In terms of biological role, specifically methylates the pseudouridine at position 1915 (m3Psi1915) in 23S rRNA. The chain is Ribosomal RNA large subunit methyltransferase H from Bdellovibrio bacteriovorus (strain ATCC 15356 / DSM 50701 / NCIMB 9529 / HD100).